A 276-amino-acid polypeptide reads, in one-letter code: NADPH-dependent 7-cyano-7-deazaguanine reductase (276 aa).

83–85 (VES) is a binding site for substrate. Position 85–86 (85–86 (SK)) interacts with NADPH. Cys-184 (thioimide intermediate) is an active-site residue. The active-site Proton donor is the Asp-191. Residue 223–224 (HE) participates in substrate binding. 252–253 (RG) contributes to the NADPH binding site.

It belongs to the GTP cyclohydrolase I family. QueF type 2 subfamily. Homodimer.

The protein localises to the cytoplasm. It carries out the reaction 7-aminomethyl-7-carbaguanine + 2 NADP(+) = 7-cyano-7-deazaguanine + 2 NADPH + 3 H(+). The protein operates within tRNA modification; tRNA-queuosine biosynthesis. In terms of biological role, catalyzes the NADPH-dependent reduction of 7-cyano-7-deazaguanine (preQ0) to 7-aminomethyl-7-deazaguanine (preQ1). The protein is NADPH-dependent 7-cyano-7-deazaguanine reductase of Azotobacter vinelandii (strain DJ / ATCC BAA-1303).